A 472-amino-acid chain; its full sequence is 3-isopropylmalate dehydratase large subunit (472 aa).

Residues cysteine 347, cysteine 407, and cysteine 410 each coordinate [4Fe-4S] cluster.

It belongs to the aconitase/IPM isomerase family. LeuC type 1 subfamily. Heterodimer of LeuC and LeuD. [4Fe-4S] cluster is required as a cofactor.

It carries out the reaction (2R,3S)-3-isopropylmalate = (2S)-2-isopropylmalate. Its pathway is amino-acid biosynthesis; L-leucine biosynthesis; L-leucine from 3-methyl-2-oxobutanoate: step 2/4. Its function is as follows. Catalyzes the isomerization between 2-isopropylmalate and 3-isopropylmalate, via the formation of 2-isopropylmaleate. The polypeptide is 3-isopropylmalate dehydratase large subunit (Synechococcus sp. (strain CC9605)).